Consider the following 321-residue polypeptide: Mas-related G-protein coupled receptor member D (321 aa).

At 1-33 (MNQTLNSSGTVESALNYSRGSTVHTAYLVLSSL) the chain is on the extracellular side. Residues N2, N6, and N16 are each glycosylated (N-linked (GlcNAc...) asparagine). The chain crosses the membrane as a helical span at residues 34–54 (AMFTCLCGMAGNSMVIWLLGF). Topologically, residues 55–59 (RMHRN) are cytoplasmic. The helical transmembrane segment at 60–80 (PFCIYILNLAAADLLFLFSMA) threads the bilayer. Topologically, residues 81-112 (STLSLETQPLVNTTDKVHELMKRLMYFAYTVG) are extracellular. N92 carries N-linked (GlcNAc...) asparagine glycosylation. Residues 113–133 (LSLLTAISTQRCLSVLFPIWF) traverse the membrane as a helical segment. At 134–142 (KCHRPRHLS) the chain is on the cytoplasmic side. A helical membrane pass occupies residues 143–163 (AWVCGLLWTLCLLMNGLTSSF). At 164–184 (CSKFLKFNEDRCFRVDMVQAA) the chain is on the extracellular side. Residues 185 to 205 (LIMGVLTPVMTLSSLTLFVWV) traverse the membrane as a helical segment. Residues 206–218 (RRSSQQWRRQPTR) are Cytoplasmic-facing. Residues 219–239 (LFVVVLASVLVFLICSLPLSI) form a helical membrane-spanning segment. The Extracellular portion of the chain corresponds to 240-257 (YWFVLYWLSLPPEMQVLC). A helical membrane pass occupies residues 258 to 280 (FSLSRLSSSVSSSANPVIYFLVG). Residues 281–321 (SRRSHRLPTRSLGTVLQQALREEPELEGGETPTVGTNEMGA) are Cytoplasmic-facing. The disordered stretch occupies residues 302–321 (EEPELEGGETPTVGTNEMGA).

Belongs to the G-protein coupled receptor 1 family. Mas subfamily.

It is found in the cell membrane. May regulate nociceptor function and/or development, including the sensation or modulation of pain. Functions as a specific membrane receptor for beta-alanine. Beta-alanine at micromolar doses specifically evoked Ca(2+) influx in cells expressing the receptor. Beta-alanine decreases forskolin-stimulated cAMP production in cells expressing the receptor, suggesting that the receptor couples with G-protein G(q) and G(i). The sequence is that of Mas-related G-protein coupled receptor member D (MRGPRD) from Homo sapiens (Human).